Reading from the N-terminus, the 668-residue chain is DNA ligase (668 aa).

NAD(+)-binding positions include 34-38, 83-84, and Glu114; these read DTEYD and SL. Lys116 functions as the N6-AMP-lysine intermediate in the catalytic mechanism. Residues Arg137, Glu171, Lys286, and Lys310 each coordinate NAD(+). Residues Cys404, Cys407, Cys422, and Cys427 each coordinate Zn(2+). The BRCT domain maps to 588-668; the sequence is NSDSIIANKT…FFDLLKSEKG (81 aa).

This sequence belongs to the NAD-dependent DNA ligase family. LigA subfamily. Mg(2+) serves as cofactor. Requires Mn(2+) as cofactor.

It catalyses the reaction NAD(+) + (deoxyribonucleotide)n-3'-hydroxyl + 5'-phospho-(deoxyribonucleotide)m = (deoxyribonucleotide)n+m + AMP + beta-nicotinamide D-nucleotide.. DNA ligase that catalyzes the formation of phosphodiester linkages between 5'-phosphoryl and 3'-hydroxyl groups in double-stranded DNA using NAD as a coenzyme and as the energy source for the reaction. It is essential for DNA replication and repair of damaged DNA. This is DNA ligase from Mycoplasma capricolum subsp. capricolum (strain California kid / ATCC 27343 / NCTC 10154).